A 311-amino-acid chain; its full sequence is Uridine phosphorylase 1 (311 aa).

Residues Gly-61, Arg-95, and 139–142 (RIGT) contribute to the phosphate site. Uridine-binding positions include 143-144 (SG) and 218-220 (QGR).

Belongs to the PNP/UDP phosphorylase family. Homodimer. Post-translationally, the N-terminus is blocked.

The enzyme catalyses uridine + phosphate = alpha-D-ribose 1-phosphate + uracil. It catalyses the reaction 2'-deoxyuridine + phosphate = 2-deoxy-alpha-D-ribose 1-phosphate + uracil. The protein operates within pyrimidine metabolism; UMP biosynthesis via salvage pathway; uracil from uridine (phosphorylase route): step 1/1. With respect to regulation, strongly inhibited by 2,2'-anhydro-5-ethyluridine, a competitive inhibitor. In terms of biological role, catalyzes the reversible phosphorylytic cleavage of uridine to uracil and ribose-1-phosphate which can then be utilized as carbon and energy sources or in the rescue of pyrimidine bases for nucleotide synthesis. Shows broad substrate specificity and can also accept deoxyuridine and other analogous compounds. The polypeptide is Uridine phosphorylase 1 (Mus musculus (Mouse)).